A 439-amino-acid polypeptide reads, in one-letter code: Ribosomal protein uS12 methylthiotransferase RimO (439 aa).

The region spanning 5-115 (PRISFTSLGC…VLDAVHRALP (111 aa)) is the MTTase N-terminal domain. Residues C14, C50, C79, C146, C150, and C153 each coordinate [4Fe-4S] cluster. The region spanning 132–369 (LTPRHYAYLK…MARQQKISAR (238 aa)) is the Radical SAM core domain. In terms of domain architecture, TRAM spans 372–438 (KRKVGTRQQI…QYDLHGSVAG (67 aa)).

Belongs to the methylthiotransferase family. RimO subfamily. [4Fe-4S] cluster serves as cofactor.

It localises to the cytoplasm. It carries out the reaction L-aspartate(89)-[ribosomal protein uS12]-hydrogen + (sulfur carrier)-SH + AH2 + 2 S-adenosyl-L-methionine = 3-methylsulfanyl-L-aspartate(89)-[ribosomal protein uS12]-hydrogen + (sulfur carrier)-H + 5'-deoxyadenosine + L-methionine + A + S-adenosyl-L-homocysteine + 2 H(+). Its function is as follows. Catalyzes the methylthiolation of an aspartic acid residue of ribosomal protein uS12. The sequence is that of Ribosomal protein uS12 methylthiotransferase RimO from Bradyrhizobium diazoefficiens (strain JCM 10833 / BCRC 13528 / IAM 13628 / NBRC 14792 / USDA 110).